Consider the following 357-residue polypeptide: Peptide chain release factor 1 (357 aa).

Glutamine 232 bears the N5-methylglutamine mark.

Belongs to the prokaryotic/mitochondrial release factor family. Post-translationally, methylated by PrmC. Methylation increases the termination efficiency of RF1.

The protein resides in the cytoplasm. Peptide chain release factor 1 directs the termination of translation in response to the peptide chain termination codons UAG and UAA. In Maridesulfovibrio salexigens (strain ATCC 14822 / DSM 2638 / NCIMB 8403 / VKM B-1763) (Desulfovibrio salexigens), this protein is Peptide chain release factor 1.